The sequence spans 415 residues: Gamma-glutamyl phosphate reductase 1 (415 aa).

It belongs to the gamma-glutamyl phosphate reductase family.

It is found in the cytoplasm. The catalysed reaction is L-glutamate 5-semialdehyde + phosphate + NADP(+) = L-glutamyl 5-phosphate + NADPH + H(+). Its pathway is amino-acid biosynthesis; L-proline biosynthesis; L-glutamate 5-semialdehyde from L-glutamate: step 2/2. Its function is as follows. Catalyzes the NADPH-dependent reduction of L-glutamate 5-phosphate into L-glutamate 5-semialdehyde and phosphate. The product spontaneously undergoes cyclization to form 1-pyrroline-5-carboxylate. The polypeptide is Gamma-glutamyl phosphate reductase 1 (Bacillus licheniformis (strain ATCC 14580 / DSM 13 / JCM 2505 / CCUG 7422 / NBRC 12200 / NCIMB 9375 / NCTC 10341 / NRRL NRS-1264 / Gibson 46)).